The following is a 658-amino-acid chain: Endoplasmic reticulum chaperone BiP (658 aa).

Positions 1 to 19 are cleaved as a signal peptide; it reads MVTMKLFALVLLVSASVFA. Residues 38–41, K98, 228–230, 294–301, and 365–368 contribute to the ATP site; these read GTTY, GGT, EKAKRALS, and GSTR. A nucleotide-binding (NBD) region spans residues 127 to 281; sequence KPYIEVDIGD…KKKTGKDVRA (155 aa). The interval 410-420 is interdomain linker; that stretch reads QDTGDLVLLDV. The tract at residues 421–501 is substrate-binding (SBD); sequence CPLTLGIETV…PRGVPQIEVT (81 aa). Residues 634 to 658 form a disordered region; sequence KLYGGAGAPPPEGAEGAEETEKDEL. Over residues 648 to 658 the composition is skewed to acidic residues; that stretch reads EGAEETEKDEL. The short motif at 655–658 is the Prevents secretion from ER element; it reads KDEL.

Belongs to the heat shock protein 70 family. Monomer and homooligomer; homooligomerization via the interdomain linker inactivates the chaperone activity and acts as a storage of hspa5/BiP molecules. Interacts with DNAJC10. Interacts with dnajb9/ERdj4; leading to recruit hspa5/BiP to ern1/ire1. Interacts with ern1/ire1; interaction takes place following interaction with dnajb9/ERdj4 and leads to inactivate ern1/IRE1.

It is found in the endoplasmic reticulum lumen. The catalysed reaction is ATP + H2O = ADP + phosphate + H(+). With respect to regulation, the chaperone activity is regulated by ATP-induced allosteric coupling of the nucleotide-binding (NBD) and substrate-binding (SBD) domains. In the ADP-bound and nucleotide-free (apo) states, the two domains have little interaction. In contrast, in the ATP-bound state the two domains are tightly coupled, which results in drastically accelerated kinetics in both binding and release of polypeptide substrates. J domain-containing co-chaperones (dnajb9/ERdj4 or dnajc10/ERdj5) stimulate the ATPase activity and are required for efficient substrate recognition by hspa5/BiP. Homooligomerization inactivates participating hspa5/BiP protomers and probably act as reservoirs to store hspa5/BiP molecules when they are not needed by the cell. Functionally, endoplasmic reticulum chaperone that plays a key role in protein folding and quality control in the endoplasmic reticulum lumen. Involved in the correct folding of proteins and degradation of misfolded proteins via its interaction with dnajc10/ERdj5, probably to facilitate the release of dnajc10/ERdj5 from its substrate. Acts as a key repressor of the EIF2AK3/PERK and ERN1/IRE1-mediated unfolded protein response (UPR). In the unstressed endoplasmic reticulum, recruited by DNAJB9/ERdj4 to the luminal region of ERN1/IRE1, leading to disrupt the dimerization of ERN1/IRE1, thereby inactivating ERN1/IRE1. Also binds and inactivates EIF2AK3/PERK in unstressed cells. Accumulation of misfolded protein in the endoplasmic reticulum causes release of HSPA5/BiP from ERN1/IRE1 and EIF2AK3/PERK, allowing their homodimerization and subsequent activation. The protein is Endoplasmic reticulum chaperone BiP of Xenopus laevis (African clawed frog).